A 289-amino-acid chain; its full sequence is Sphingomyelinase D (289 aa).

The signal sequence occupies residues methionine 1–alanine 22. Histidine 34 is a catalytic residue. The Mg(2+) site is built by glutamate 54, aspartate 56, and aspartate 103. The short motif at alanine 282–tryptophan 289 is the SMD-tail element.

It belongs to the sphingomyelinase D/phospholipase D family. Mg(2+) serves as cofactor.

It localises to the secreted. The enzyme catalyses a sphingomyelin + H2O = an N-acylsphing-4-enine 1-phosphate + choline + H(+). With respect to regulation, sphingomyelinase activity is reduced by 33 percent following addition of EDTA. Functionally, catalyzes the hydrolysis of sphingomyelin. Sphingomyelinases D are produced by some spider in their venoms, but also by arthropods such as ticks, or pathogenic bacteria and fungi. They might play a role in pathogenicity through different mechanisms, such as membrane destabilization and host cell penetration, but also pulmonary inflammation and cutaneous lesions. This Aspergillus flavus (strain ATCC 200026 / FGSC A1120 / IAM 13836 / NRRL 3357 / JCM 12722 / SRRC 167) protein is Sphingomyelinase D.